Consider the following 195-residue polypeptide: MRVVLITLFLFIGAAVAEDAGIDAITPEEGKANNIIEAYESPRFQKFVTHCSSHVTQTCSGNDPLNNQEASRMNSPFGLSFCLFDSMEKCLADHKASLKDPQDNNNLASMSSLPGSIQNQPLLIETVKFRTVLKTCSHVSAQYCFTNPNVATSALADCLMPSLNQCVYPGSILLPWPPPPPPPPPPPPPPPPPLI.

The first 17 residues, 1-17, serve as a signal peptide directing secretion; sequence MRVVLITLFLFIGAAVA.

The protein belongs to the nodulin 20 family.

It localises to the symbiosome. Its subcellular location is the peribacteroid membrane. The protein resides in the peribacteroid space. The chain is Nodulin-20a (NOD20A) from Glycine max (Soybean).